A 159-amino-acid chain; its full sequence is Phosphopantetheine adenylyltransferase (159 aa).

A substrate-binding site is contributed by threonine 10. Residues 10-11 (TF) and histidine 18 contribute to the ATP site. Residues lysine 42, methionine 74, and arginine 88 each coordinate substrate. ATP-binding positions include 89–91 (GLR), glutamate 99, and 124–130 (WSFISSS).

This sequence belongs to the bacterial CoaD family. Homohexamer. Mg(2+) serves as cofactor.

Its subcellular location is the cytoplasm. It catalyses the reaction (R)-4'-phosphopantetheine + ATP + H(+) = 3'-dephospho-CoA + diphosphate. It participates in cofactor biosynthesis; coenzyme A biosynthesis; CoA from (R)-pantothenate: step 4/5. Reversibly transfers an adenylyl group from ATP to 4'-phosphopantetheine, yielding dephospho-CoA (dPCoA) and pyrophosphate. The sequence is that of Phosphopantetheine adenylyltransferase from Salmonella paratyphi A (strain ATCC 9150 / SARB42).